The primary structure comprises 258 residues: Malonyl-[acyl-carrier protein] O-methyltransferase (258 aa).

The protein belongs to the methyltransferase superfamily.

The enzyme catalyses malonyl-[ACP] + S-adenosyl-L-methionine = malonyl-[ACP] methyl ester + S-adenosyl-L-homocysteine. It participates in cofactor biosynthesis; biotin biosynthesis. Its function is as follows. Converts the free carboxyl group of a malonyl-thioester to its methyl ester by transfer of a methyl group from S-adenosyl-L-methionine (SAM). It allows to synthesize pimeloyl-ACP via the fatty acid synthetic pathway. The polypeptide is Malonyl-[acyl-carrier protein] O-methyltransferase (Haemophilus ducreyi (strain 35000HP / ATCC 700724)).